The primary structure comprises 505 residues: AAA-ATPase At5g17760 (505 aa).

Residues 11–27 (TSVFTAYASMAGYMMMI) traverse the membrane as a helical segment. Residues 136-155 (GGGGGVGGRGGGGGRRGGMD) form a disordered region. A compositionally biased stretch (gly residues) spans 137 to 151 (GGGGVGGRGGGGGRR). ATP is bound at residue 260-267 (GPPGTGKS).

Belongs to the AAA ATPase family. BCS1 subfamily. The cofactor is Mg(2+).

Its subcellular location is the membrane. The catalysed reaction is ATP + H2O = ADP + phosphate + H(+). In Arabidopsis thaliana (Mouse-ear cress), this protein is AAA-ATPase At5g17760.